The primary structure comprises 309 residues: tRNA dimethylallyltransferase (309 aa).

ATP is bound at residue G15–S22. T17–S22 provides a ligand contact to substrate. The interaction with substrate tRNA stretch occupies residues D40–Q43.

It belongs to the IPP transferase family. As to quaternary structure, monomer. Mg(2+) is required as a cofactor.

It catalyses the reaction adenosine(37) in tRNA + dimethylallyl diphosphate = N(6)-dimethylallyladenosine(37) in tRNA + diphosphate. Catalyzes the transfer of a dimethylallyl group onto the adenine at position 37 in tRNAs that read codons beginning with uridine, leading to the formation of N6-(dimethylallyl)adenosine (i(6)A). This chain is tRNA dimethylallyltransferase, found in Chlorobium phaeovibrioides (strain DSM 265 / 1930) (Prosthecochloris vibrioformis (strain DSM 265)).